The following is a 326-amino-acid chain: Nucleotide sugar transporter SLC35D2 (326 aa).

The Extracellular portion of the chain corresponds to 1-15; the sequence is MEEPNAAPLPSRLAR. The chain crosses the membrane as a helical span at residues 16 to 36; the sequence is LLSALFYGTCSFLIVLVNKAL. At 37–41 the chain is on the cytoplasmic side; the sequence is LTTYG. Residues 42–62 traverse the membrane as a helical segment; that stretch reads FPSPIVLGIGQMATTIMILYV. At 63–130 the chain is on the extracellular side; it reads FKLNKIIHFP…LLEAIILGTQ (68 aa). Residues 131–151 form a helical membrane-spanning segment; the sequence is YSLNIILSVLAIVLGAFIAAG. Over 152 to 155 the chain is Cytoplasmic; the sequence is SDLT. A helical membrane pass occupies residues 156-176; that stretch reads FNLEGYVFVFLNDIFTAANGV. Over 177–189 the chain is Extracellular; the sequence is YTKQKMDPKELGK. Residues 190–210 form a helical membrane-spanning segment; it reads YGVLFYNACFMLIPTVIISVS. The Cytoplasmic segment spans residues 211–225; it reads TGDFQQATEFRHWKN. Residues 226 to 246 traverse the membrane as a helical segment; the sequence is VLFIIQFLLSCLLGFLLMYST. Topologically, residues 247–253 are extracellular; that stretch reads ALCSYYN. A helical membrane pass occupies residues 254–276; it reads SALTTAVVGAIKNVSVAYIGMLV. Topologically, residues 277-280 are cytoplasmic; that stretch reads GGDY. The chain crosses the membrane as a helical span at residues 281-303; that stretch reads IFSLLNFIGLNICMAGGLRYSFL. Over 304–326 the chain is Extracellular; it reads TLSSQLKPKQPVDEESIPLDLKS.

Belongs to the TPT transporter family. SLC35D subfamily.

It localises to the golgi apparatus membrane. It carries out the reaction UMP(out) + UDP-N-acetyl-alpha-D-glucosamine(in) = UMP(in) + UDP-N-acetyl-alpha-D-glucosamine(out). It catalyses the reaction UMP(out) + UDP-alpha-D-glucose(in) = UMP(in) + UDP-alpha-D-glucose(out). Nucleotide sugar antiporter transporting UDP-N-acetylglucosamine (UDP-GlcNAc) and UDP-glucose (UDP-Glc) from the cytosol into the lumen of the Golgi in exchange of UMP. By supplying UDP-N-acetylglucosamine, a donor substrate to heparan sulfate synthases, probably takes part in the synthesis of these glycoconjugates. The polypeptide is Nucleotide sugar transporter SLC35D2 (Mus musculus (Mouse)).